We begin with the raw amino-acid sequence, 184 residues long: MTVPLYADAREAIACKTRFVPDFPVPGVIFEDLTPVLADAAAFSLIVDELAKNAMRLGADFIGGLDARGFLLGSAVAYKAGTGILAIRKKGKLPPPVHSEEYSLEYGTAALELPAEGLELEDKKVVLVDDVLATGGTLDAARKLIEACGATVSGYAVVLEVDGLGGRERLNDAPLVVINESATA.

It belongs to the purine/pyrimidine phosphoribosyltransferase family. Homodimer.

Its subcellular location is the cytoplasm. The enzyme catalyses AMP + diphosphate = 5-phospho-alpha-D-ribose 1-diphosphate + adenine. It functions in the pathway purine metabolism; AMP biosynthesis via salvage pathway; AMP from adenine: step 1/1. Its function is as follows. Catalyzes a salvage reaction resulting in the formation of AMP, that is energically less costly than de novo synthesis. This Corynebacterium diphtheriae (strain ATCC 700971 / NCTC 13129 / Biotype gravis) protein is Adenine phosphoribosyltransferase.